The sequence spans 162 residues: Cyclic pyranopterin monophosphate synthase (162 aa).

Substrate contacts are provided by residues 75–77 (LCH) and 113–114 (ME). Asp128 is an active-site residue.

The protein belongs to the MoaC family. Homohexamer; trimer of dimers.

It carries out the reaction (8S)-3',8-cyclo-7,8-dihydroguanosine 5'-triphosphate = cyclic pyranopterin phosphate + diphosphate. The protein operates within cofactor biosynthesis; molybdopterin biosynthesis. Its function is as follows. Catalyzes the conversion of (8S)-3',8-cyclo-7,8-dihydroguanosine 5'-triphosphate to cyclic pyranopterin monophosphate (cPMP). The polypeptide is Cyclic pyranopterin monophosphate synthase (Burkholderia lata (strain ATCC 17760 / DSM 23089 / LMG 22485 / NCIMB 9086 / R18194 / 383)).